A 328-amino-acid polypeptide reads, in one-letter code: AA9 family lytic polysaccharide monooxygenase A (328 aa).

A signal peptide spans 1-21 (MPSTKVAALSAVLALASTVAG). Position 22 (H22) interacts with Cu(2+). H22 is subject to Methylhistidine. 2 disulfide bridges follow: C77/C199 and C118/C122. N80 carries an N-linked (GlcNAc...) asparagine glycan. H107 is a binding site for Cu(2+). 2 N-linked (GlcNAc...) asparagine glycosylation sites follow: N121 and N159. The O2 site is built by H185 and Q194. Y196 provides a ligand contact to Cu(2+). S235 and S237 each carry an O-linked (Man...) serine glycan. 2 O-linked (Man...) threonine glycosylation sites follow: T238 and T245.

This sequence belongs to the polysaccharide monooxygenase AA9 family. It depends on Cu(2+) as a cofactor. Post-translationally, the catalytically essential N-terminal histidine His-22 is post-translationally modified by methylation to prevent protonation of the histidine side chain, and protect the critical active site of the enzyme from oxidative damage.

It is found in the secreted. The catalysed reaction is [(1-&gt;4)-beta-D-glucosyl]n+m + reduced acceptor + O2 = 4-dehydro-beta-D-glucosyl-[(1-&gt;4)-beta-D-glucosyl]n-1 + [(1-&gt;4)-beta-D-glucosyl]m + acceptor + H2O.. Lytic polysaccharide monooxygenase (LPMO) that depolymerizes crystalline and amorphous polysaccharides via the oxidation of scissile alpha- or beta-(1-4)-glycosidic bonds, yielding C1 and C4 oxidation products. Catalysis by LPMOs requires the reduction of the active-site copper from Cu(II) to Cu(I) by a reducing agent and H(2)O(2) or O(2) as a cosubstrate. Shows activity on cellulosic substrates (Avicel, carboxymethylcellulose) and xylan. This is AA9 family lytic polysaccharide monooxygenase A from Talaromyces verruculosus (Penicillium verruculosum).